The sequence spans 1006 residues: E3 ubiquitin-protein ligase MIB1 (1006 aa).

The region spanning 6–74 (NNRVMVEGVG…AYDLRILDSA (69 aa)) is the MIB/HERC2 1 domain. Residues 80 to 132 (HDGTMCDTCRQQPIIGIRWKCAECTNYDLCTVCYHGDKHHLRHRFYRITTPGS) form a ZZ-type zinc finger. The Zn(2+) site is built by C85, C88, C100, C103, C109, C112, H118, and H122. Positions 143-221 (SKKITARGIF…MSDLKCVQDA (79 aa)) constitute an MIB/HERC2 2 domain. The residue at position 408 (S408) is a Phosphoserine. ANK repeat units lie at residues 430 to 460 (DLNE…DVNG), 463 to 492 (AGHT…DVEA), 496 to 525 (DGDR…DLNA), 529 to 558 (RRQT…HPSL), 562 to 591 (EGDT…DVTI), 595 to 627 (NGFN…IVDE), 631 to 661 (DGYT…NLDI), 665 to 694 (NQQT…KLDI), and 698 to 729 (DGDT…KVDA). RING-type zinc fingers lie at residues 819 to 854 (CMVC…LICK) and 866 to 901 (CVVC…VQCR). The stretch at 935 to 962 (QKDKDNTNVNADVQKLQQQLQDIKEQTM) forms a coiled coil. Residues 963–996 (CPVCLDRLKNMIFLCGHGTCQLCGDRMSECPICR) form an RING-type 3 zinc finger.

In terms of assembly, interacts with CEP131 and PCM1. In terms of processing, ubiquitinated; this modification is inhibited in response to cellular stress, such as ultraviolet light (UV) radiation or heat shock. Ubiquitinated; possibly via autoubiquitination. As to expression, detected in all tissues tested. Present in embryo, embryonic stem cells, bladder, skeletal muscle, bladder, uterus, testis, stomach, colon, ileum, trachea, lung, aorta, kidney, spleen, liver and vas deferens (at protein level). Highly expressed in testis.

It localises to the cytoplasm. The protein localises to the cytoskeleton. The protein resides in the microtubule organizing center. It is found in the centrosome. Its subcellular location is the centriolar satellite. It localises to the cell membrane. It carries out the reaction S-ubiquitinyl-[E2 ubiquitin-conjugating enzyme]-L-cysteine + [acceptor protein]-L-lysine = [E2 ubiquitin-conjugating enzyme]-L-cysteine + N(6)-ubiquitinyl-[acceptor protein]-L-lysine.. It participates in protein modification; protein ubiquitination. In terms of biological role, E3 ubiquitin-protein ligase that mediates ubiquitination of Delta receptors, which act as ligands of Notch proteins. Positively regulates the Delta-mediated Notch signaling by ubiquitinating the intracellular domain of Delta, leading to endocytosis of Delta receptors. Involved in ubiquitination of centriolar satellite CEP131, CEP290 and PCM1 proteins and hence inhibits primary cilium formation in proliferating cells. Mediates 'Lys-63'-linked polyubiquitination of TBK1, which probably participates in kinase activation. Probably mediates ubiquitination and subsequent proteasomal degradation of DAPK1, thereby antagonizing anti-apoptotic effects of DAPK1 to promote TNF-induced apoptosis. The polypeptide is E3 ubiquitin-protein ligase MIB1 (Mib1) (Mus musculus (Mouse)).